Here is a 257-residue protein sequence, read N- to C-terminus: TLC domain-containing protein 3A (257 aa).

Transmembrane regions (helical) follow at residues 1-21 (MLLT…LSIW), 42-62 (LVSS…IISC), 71-91 (WLAT…FYAM), 114-134 (LIEN…LVPI), 142-162 (LGDF…FVSL), 181-201 (GILT…FMYW), and 220-240 (LHCN…FSLL). The TLC domain maps to 33 to 249 (DDCLTVGTRL…LCKKAARLFD (217 aa)).

As to quaternary structure, interacts with GGT7 isoform 3 and SLC3A2.

It localises to the cell membrane. This chain is TLC domain-containing protein 3A (Tlcd3a), found in Mus musculus (Mouse).